Reading from the N-terminus, the 188-residue chain is MLQLSSTQVTPVIAQGGVIAYPTEAVYGLGCDPDNDQAIEKLLAVKQRPWQKGLILVASSFEQLLPYVDVAQLTQAQLDFAHSKWPGPFTFVMPVKSHVSNKLRGEFDSIAVRVSAHPIVRELCDSLNKPLVSTSANLAGQDPVLTSRQILTDFADKIDALVLGDLGQQAQPSTIIDARSGLVLRNGQ.

The YrdC-like domain maps to 3 to 188 (QLSSTQVTPV…RSGLVLRNGQ (186 aa)).

This sequence belongs to the SUA5 family. TsaC subfamily.

Its subcellular location is the cytoplasm. The enzyme catalyses L-threonine + hydrogencarbonate + ATP = L-threonylcarbamoyladenylate + diphosphate + H2O. Functionally, required for the formation of a threonylcarbamoyl group on adenosine at position 37 (t(6)A37) in tRNAs that read codons beginning with adenine. Catalyzes the conversion of L-threonine, HCO(3)(-)/CO(2) and ATP to give threonylcarbamoyl-AMP (TC-AMP) as the acyladenylate intermediate, with the release of diphosphate. This Shewanella denitrificans (strain OS217 / ATCC BAA-1090 / DSM 15013) protein is Threonylcarbamoyl-AMP synthase.